We begin with the raw amino-acid sequence, 166 residues long: NADPH-dependent 7-cyano-7-deazaguanine reductase (166 aa).

Cys57 (thioimide intermediate) is an active-site residue. Asp64 serves as the catalytic Proton donor. Residues 79–81 (VES) and 98–99 (HE) contribute to the substrate site.

It belongs to the GTP cyclohydrolase I family. QueF type 1 subfamily.

It localises to the cytoplasm. The enzyme catalyses 7-aminomethyl-7-carbaguanine + 2 NADP(+) = 7-cyano-7-deazaguanine + 2 NADPH + 3 H(+). It participates in tRNA modification; tRNA-queuosine biosynthesis. Functionally, catalyzes the NADPH-dependent reduction of 7-cyano-7-deazaguanine (preQ0) to 7-aminomethyl-7-deazaguanine (preQ1). In Alkaliphilus metalliredigens (strain QYMF), this protein is NADPH-dependent 7-cyano-7-deazaguanine reductase.